Consider the following 443-residue polypeptide: Ribulose bisphosphate carboxylase large chain (443 aa).

N6,N6,N6-trimethyllysine is present on K7. Positions 116 and 166 each coordinate substrate. K168 acts as the Proton acceptor in catalysis. Residue K170 coordinates substrate. Mg(2+) is bound by residues K194, D196, and E197. N6-carboxylysine is present on K194. H287 (proton acceptor) is an active-site residue. Substrate-binding residues include R288, H320, and S372.

It belongs to the RuBisCO large chain family. Type I subfamily. In terms of assembly, heterohexadecamer of 8 large chains and 8 small chains; disulfide-linked. The disulfide link is formed within the large subunit homodimers. Mg(2+) is required as a cofactor. In terms of processing, the disulfide bond which can form in the large chain dimeric partners within the hexadecamer appears to be associated with oxidative stress and protein turnover.

The protein resides in the plastid. It is found in the chloroplast. The catalysed reaction is 2 (2R)-3-phosphoglycerate + 2 H(+) = D-ribulose 1,5-bisphosphate + CO2 + H2O. It catalyses the reaction D-ribulose 1,5-bisphosphate + O2 = 2-phosphoglycolate + (2R)-3-phosphoglycerate + 2 H(+). Functionally, ruBisCO catalyzes two reactions: the carboxylation of D-ribulose 1,5-bisphosphate, the primary event in carbon dioxide fixation, as well as the oxidative fragmentation of the pentose substrate in the photorespiration process. Both reactions occur simultaneously and in competition at the same active site. The chain is Ribulose bisphosphate carboxylase large chain from Abies sachalinensis (Sakhalin fir).